Reading from the N-terminus, the 149-residue chain is Large ribosomal subunit protein uL13 (149 aa).

Belongs to the universal ribosomal protein uL13 family. Part of the 50S ribosomal subunit.

Its function is as follows. This protein is one of the early assembly proteins of the 50S ribosomal subunit, although it is not seen to bind rRNA by itself. It is important during the early stages of 50S assembly. The polypeptide is Large ribosomal subunit protein uL13 (Thermotoga maritima (strain ATCC 43589 / DSM 3109 / JCM 10099 / NBRC 100826 / MSB8)).